Consider the following 1054-residue polypeptide: Calcium-transporting ATPase 2, endoplasmic reticulum-type (1054 aa).

Over 1-53 (MEEEKSFSAWSWSVEQCLKEYKTRLDKGLTSEDVQIRRQKYGFNELAKEKGKP) the chain is Cytoplasmic. Residues 54–74 (LWHLVLEQFDDTLVKILLGAA) traverse the membrane as a helical segment. At 75–98 (FISFVLAFLGEEHGSGSGFEAFVE) the chain is on the lumenal side. The helical transmembrane segment at 99–118 (PFVIVLILILNAVVGVWQES) threads the bilayer. The Cytoplasmic portion of the chain corresponds to 119-262 (NAEKALEALK…ESETPLKKKL (144 aa)). The chain crosses the membrane as a helical span at residues 263–282 (DEFGSRLTTAICIVCVLVWM). The Lumenal portion of the chain corresponds to 283–312 (INYKNFVSWDVVDGYKPVNIKFSFEKCTYY). Residues 313-330 (FKIAVALAVAAIPEGLPA) traverse the membrane as a helical segment. V321, A322, I324, and E326 together coordinate Ca(2+). Topologically, residues 331 to 782 (VITTCLALGT…AEGRSIYNNM (452 aa)) are cytoplasmic. D368 (4-aspartylphosphate intermediate) is an active-site residue. Mg(2+) contacts are provided by D727 and D731. A helical membrane pass occupies residues 783 to 802 (KAFIRYMISSNVGEVISIFL). Ca(2+)-binding residues include N793 and E796. Over 803 to 812 (TAALGIPECM) the chain is Lumenal. The helical transmembrane segment at 813–833 (IPVQLLWVNLVTDGPPATALG) threads the bilayer. Ca(2+)-binding residues include N821, T824, and D825. Residues 834-853 (FNPADIDIMKKPPRKSDDCL) lie on the Cytoplasmic side of the membrane. The helical transmembrane segment at 854 to 876 (IDSWVLIRYLVIGSYVGVATVGI) threads the bilayer. The Lumenal portion of the chain corresponds to 877 to 949 (FVLWYTQASF…YFTLGKVKPM (73 aa)). A helical membrane pass occupies residues 950–969 (TLSLTVLVAIEMFNSLNALS). E960 serves as a coordination point for Ca(2+). The Cytoplasmic portion of the chain corresponds to 970 to 982 (EDNSLLTMPPWRN). Residues 983-1001 (PWLLVAMTVSFALHCVILY) form a helical membrane-spanning segment. Topologically, residues 1002 to 1016 (VPFLANVFGIVPLSF) are lumenal. The helical transmembrane segment at 1017-1037 (REWFVVILVSFPVILIDEALK) threads the bilayer. At 1038–1054 (FIGRCRRTRIKKKIKTM) the chain is on the cytoplasmic side.

This sequence belongs to the cation transport ATPase (P-type) (TC 3.A.3) family. Type IIA subfamily.

It localises to the membrane. It catalyses the reaction Ca(2+)(in) + ATP + H2O = Ca(2+)(out) + ADP + phosphate + H(+). Functionally, this magnesium-dependent enzyme catalyzes the hydrolysis of ATP coupled with the translocation of calcium from the cytosol to an endomembrane compartment. The chain is Calcium-transporting ATPase 2, endoplasmic reticulum-type (ECA2) from Arabidopsis thaliana (Mouse-ear cress).